Here is a 1135-residue protein sequence, read N- to C-terminus: Nonribosomal peptide synthetase 9 (1135 aa).

The tract at residues 23-77 (TKQITTATYIKLAWAVVISCNTGSNDTVFGITVNGRGAPIDGAGEMTGATIATIP) is condensation 1. The tract at residues 177 to 562 (SYAELIRSAN…RRIDEIQEAT (386 aa)) is adenylation. The segment at 485–507 (GPSPPVGRSSSNRAGSGRCAMGS) is disordered. Residues 491–502 (GRSSSNRAGSGR) are compositionally biased toward low complexity. One can recognise a Carrier domain in the interval 672–748 (APSNRVEQDL…AIANKIGDVQ (77 aa)). S709 carries the post-translational modification O-(pantetheine 4'-phosphoryl)serine. The tract at residues 746–999 (DVQRAAIKLV…TTLWPVVAQV (254 aa)) is condensation 2.

Belongs to the NRP synthetase family.

Its function is as follows. Nonribosomal peptide synthesis (NRPS) is a key mechanism responsible for the biosynthesis of bioactive metabolites which are potentially contributing to organismal virulence. The chain is Nonribosomal peptide synthetase 9 (NRPS9) from Aspergillus fumigatus (strain ATCC MYA-4609 / CBS 101355 / FGSC A1100 / Af293) (Neosartorya fumigata).